Here is a 176-residue protein sequence, read N- to C-terminus: Peptide deformylase 1 (176 aa).

Residues C99 and H141 each coordinate Fe cation. E142 is a catalytic residue. H145 contributes to the Fe cation binding site.

It belongs to the polypeptide deformylase family. It depends on Fe(2+) as a cofactor.

The enzyme catalyses N-terminal N-formyl-L-methionyl-[peptide] + H2O = N-terminal L-methionyl-[peptide] + formate. Functionally, removes the formyl group from the N-terminal Met of newly synthesized proteins. Requires at least a dipeptide for an efficient rate of reaction. N-terminal L-methionine is a prerequisite for activity but the enzyme has broad specificity at other positions. The polypeptide is Peptide deformylase 1 (Nitrosomonas europaea (strain ATCC 19718 / CIP 103999 / KCTC 2705 / NBRC 14298)).